The following is a 773-amino-acid chain: Subtilisin-like protease SBT3.4 (773 aa).

Residues 1-23 form the signal peptide; it reads MRNFRSSVLVVLSLIIVLNVARA. A propeptide spans 24-108 (activation peptide); the sequence is SAKSKVHIVY…VIPDSYYELA (85 aa). An Inhibitor I9 domain is found at 29–108; the sequence is VHIVYLGEKQ…VIPDSYYELA (80 aa). A Peptidase S8 domain is found at 112–620; the sequence is IWDYLGPSAD…GGLVNPEKAA (509 aa). The active-site Charge relay system is Asp142. An N-linked (GlcNAc...) asparagine glycan is attached at Asn200. Residue His216 is the Charge relay system of the active site. Residues Asn231, Asn408, and Asn536 are each glycosylated (N-linked (GlcNAc...) asparagine). Residues 382–474 form the PA domain; that stretch reads SLVYPEDPGN…IDNELGTDIL (93 aa). Residue Ser551 is the Charge relay system of the active site. An N-linked (GlcNAc...) asparagine glycan is attached at Asn643.

This sequence belongs to the peptidase S8 family.

Its subcellular location is the secreted. This Arabidopsis thaliana (Mouse-ear cress) protein is Subtilisin-like protease SBT3.4.